The primary structure comprises 215 residues: Large ribosomal subunit protein uL4 (215 aa).

Residues 46-72 form a disordered region; it reads TAKSKNRAEVSGGGRKPWAQKGGGRAR. The segment covering 56–71 has biased composition (gly residues); sequence SGGGRKPWAQKGGGRA.

The protein belongs to the universal ribosomal protein uL4 family. In terms of assembly, part of the 50S ribosomal subunit.

One of the primary rRNA binding proteins, this protein initially binds near the 5'-end of the 23S rRNA. It is important during the early stages of 50S assembly. It makes multiple contacts with different domains of the 23S rRNA in the assembled 50S subunit and ribosome. Functionally, forms part of the polypeptide exit tunnel. This is Large ribosomal subunit protein uL4 from Helicobacter pylori (strain ATCC 700392 / 26695) (Campylobacter pylori).